Here is a 424-residue protein sequence, read N- to C-terminus: Protein ImpB (424 aa).

In terms of domain architecture, UmuC spans 2 to 189 (FALADINSFY…QPVGEVWGVG (188 aa)).

Belongs to the DNA polymerase type-Y family.

Its function is as follows. Involved in UV protection and mutation. The protein is Protein ImpB (impB) of Salmonella typhimurium.